Consider the following 102-residue polypeptide: UPF0058 protein MTH_224 (102 aa).

Belongs to the UPF0058 family.

The protein is UPF0058 protein MTH_224 of Methanothermobacter thermautotrophicus (strain ATCC 29096 / DSM 1053 / JCM 10044 / NBRC 100330 / Delta H) (Methanobacterium thermoautotrophicum).